A 133-amino-acid chain; its full sequence is MDTDVLDVDTARRRIVDLTDAVRAFCTAHDDGLCNVFVPHATAGVAIIETGAGSDEDLVDTLVRLLPRDDRYRHAHGSYGHGADHLLPAFVAPSVTVPVSGGQPLLGTWQSIVLVDLNQDNPRRSVRLSFVEG.

It belongs to the UPF0047 family.

In Mycobacterium tuberculosis (strain ATCC 25618 / H37Rv), this protein is UPF0047 protein Rv2556c.